The following is a 633-amino-acid chain: MSEAPRIQLLSPRLANQIAAGEVVERPASVAKELLENSLDAGARRIDVEVEQGGVKLLRVRDDGRGIPADDLPLALARHATSKIRELEDLERVMSLGFRGEALASISSVARLTMTSRTADAGEAWQVETEGRDMQPRVQPAAHPVGTSVEVRDLFFNTPARRKFLRAEKTEFDHLQEVIKRLALARFDVAFHLRHNGKTIFALHEARDELARARRVGAVCGQAFLEQALPIEVERNGLHLWGWVGLPTFSRSQPDLQYFYVNGRMVRDKLVAHAVRQAYRDVLYNGRHPTFVLFFEVDPAVVDVNVHPTKHEVRFRDSRMVHDFLYGTLHRALGEVRPDDQLAPPGATSLTEPRPTGAAAGEFGPQGEMRLAESVLESPAARVGWSGGASSSGASSGYSAYTRPEAPPSLAEAGGAYKAYFAPLPAGEAPAALPESAQDIPPLGYALAQLKGIYILAENAHGLVLVDMHAAHERITYERLKVAMASEGLRGQPLLVPESIAVSEREADCAEEHSGWFQRLGFELQRLGPETLAIRQIPALLKQAEATQLVRDVIADLLEYGTSDRIQAHLNELLGTMACHGAVRANRRLTLPEMNALLRDMEITERSGQCNHGRPTWTQLGLDELDKLFLRGR.

Disordered stretches follow at residues 336–364 (VRPD…GEFG) and 384–405 (GWSG…TRPE). The span at 388-401 (GASSSGASSGYSAY) shows a compositional bias: low complexity.

This sequence belongs to the DNA mismatch repair MutL/HexB family.

In terms of biological role, this protein is involved in the repair of mismatches in DNA. It is required for dam-dependent methyl-directed DNA mismatch repair. May act as a 'molecular matchmaker', a protein that promotes the formation of a stable complex between two or more DNA-binding proteins in an ATP-dependent manner without itself being part of a final effector complex. In Pseudomonas paraeruginosa (strain DSM 24068 / PA7) (Pseudomonas aeruginosa (strain PA7)), this protein is DNA mismatch repair protein MutL.